A 194-amino-acid chain; its full sequence is GTP cyclohydrolase-2 (194 aa).

Position 50–54 (50–54 (RIHSE)) interacts with GTP. Zn(2+) contacts are provided by Cys55, Cys66, and Cys68. GTP is bound by residues 94–96 (EGR) and Thr116. Asp128 (proton acceptor) is an active-site residue. The active-site Nucleophile is the Arg130. GTP is bound by residues Thr151 and Lys156.

It belongs to the GTP cyclohydrolase II family. Zn(2+) is required as a cofactor.

It catalyses the reaction GTP + 4 H2O = 2,5-diamino-6-hydroxy-4-(5-phosphoribosylamino)-pyrimidine + formate + 2 phosphate + 3 H(+). Its pathway is cofactor biosynthesis; riboflavin biosynthesis; 5-amino-6-(D-ribitylamino)uracil from GTP: step 1/4. Its function is as follows. Catalyzes the conversion of GTP to 2,5-diamino-6-ribosylamino-4(3H)-pyrimidinone 5'-phosphate (DARP), formate and pyrophosphate. The polypeptide is GTP cyclohydrolase-2 (Helicobacter hepaticus (strain ATCC 51449 / 3B1)).